Reading from the N-terminus, the 364-residue chain is Dihydroorotate dehydrogenase (quinone) (364 aa).

Residues A62–K66 and T86 contribute to the FMN site. K66 contacts substrate. N111–F115 serves as a coordination point for substrate. FMN contacts are provided by N142 and N175. Substrate is bound at residue N175. S178 functions as the Nucleophile in the catalytic mechanism. Position 180 (N180) interacts with substrate. Positions 216 and 244 each coordinate FMN. N245–T246 contacts substrate. Residues G267, G296, and Y317–T318 contribute to the FMN site.

Belongs to the dihydroorotate dehydrogenase family. Type 2 subfamily. Monomer. The cofactor is FMN.

It localises to the cell membrane. The enzyme catalyses (S)-dihydroorotate + a quinone = orotate + a quinol. It participates in pyrimidine metabolism; UMP biosynthesis via de novo pathway; orotate from (S)-dihydroorotate (quinone route): step 1/1. Functionally, catalyzes the conversion of dihydroorotate to orotate with quinone as electron acceptor. This chain is Dihydroorotate dehydrogenase (quinone), found in Anaeromyxobacter dehalogenans (strain 2CP-1 / ATCC BAA-258).